The chain runs to 174 residues: Crossover junction endodeoxyribonuclease RuvC (174 aa).

Residues Asp-8, Glu-67, and Asp-139 contribute to the active site. Positions 8, 67, and 139 each coordinate Mg(2+).

Belongs to the RuvC family. In terms of assembly, homodimer which binds Holliday junction (HJ) DNA. The HJ becomes 2-fold symmetrical on binding to RuvC with unstacked arms; it has a different conformation from HJ DNA in complex with RuvA. In the full resolvosome a probable DNA-RuvA(4)-RuvB(12)-RuvC(2) complex forms which resolves the HJ. Requires Mg(2+) as cofactor.

It localises to the cytoplasm. The catalysed reaction is Endonucleolytic cleavage at a junction such as a reciprocal single-stranded crossover between two homologous DNA duplexes (Holliday junction).. In terms of biological role, the RuvA-RuvB-RuvC complex processes Holliday junction (HJ) DNA during genetic recombination and DNA repair. Endonuclease that resolves HJ intermediates. Cleaves cruciform DNA by making single-stranded nicks across the HJ at symmetrical positions within the homologous arms, yielding a 5'-phosphate and a 3'-hydroxyl group; requires a central core of homology in the junction. The consensus cleavage sequence is 5'-(A/T)TT(C/G)-3'. Cleavage occurs on the 3'-side of the TT dinucleotide at the point of strand exchange. HJ branch migration catalyzed by RuvA-RuvB allows RuvC to scan DNA until it finds its consensus sequence, where it cleaves and resolves the cruciform DNA. This is Crossover junction endodeoxyribonuclease RuvC from Ectopseudomonas mendocina (strain ymp) (Pseudomonas mendocina).